The sequence spans 398 residues: Ornithine aminotransferase (398 aa).

Lys256 carries the N6-(pyridoxal phosphate)lysine modification.

This sequence belongs to the class-III pyridoxal-phosphate-dependent aminotransferase family. OAT subfamily. Pyridoxal 5'-phosphate serves as cofactor.

The protein localises to the cytoplasm. The enzyme catalyses a 2-oxocarboxylate + L-ornithine = L-glutamate 5-semialdehyde + an L-alpha-amino acid. It participates in amino-acid biosynthesis; L-proline biosynthesis; L-glutamate 5-semialdehyde from L-ornithine: step 1/1. Its function is as follows. Catalyzes the interconversion of ornithine to glutamate semialdehyde. The chain is Ornithine aminotransferase from Halalkalibacterium halodurans (strain ATCC BAA-125 / DSM 18197 / FERM 7344 / JCM 9153 / C-125) (Bacillus halodurans).